The following is a 276-amino-acid chain: Alpha N-terminal protein methyltransferase 1 (276 aa).

S-adenosyl-L-methionine contacts are provided by residues glycine 96, arginine 101, glutamate 118–valine 120, leucine 149–glutamine 150, and glutamine 165.

Belongs to the methyltransferase superfamily. NTM1 family.

The catalysed reaction is N-terminal L-alanyl-L-prolyl-L-lysyl-[protein] + 3 S-adenosyl-L-methionine = N-terminal N,N,N-trimethyl-L-alanyl-L-prolyl-L-lysyl-[protein] + 3 S-adenosyl-L-homocysteine + 3 H(+). It carries out the reaction N-terminal L-seryl-L-prolyl-L-lysyl-[protein] + 3 S-adenosyl-L-methionine = N-terminal N,N,N-trimethyl-L-seryl-L-prolyl-L-lysyl-[protein] + 3 S-adenosyl-L-homocysteine + 3 H(+). The enzyme catalyses N-terminal L-prolyl-L-prolyl-L-lysyl-[protein] + 2 S-adenosyl-L-methionine = N-terminal N,N-dimethyl-L-prolyl-L-prolyl-L-lysyl-[protein] + 2 S-adenosyl-L-homocysteine + 2 H(+). Alpha-N-methyltransferase that methylates the N-terminus of target proteins containing the N-terminal motif [Ala/Pro/Ser]-Pro-Lys when the initiator Met is cleaved. Specifically catalyzes mono-, di- or tri-methylation of exposed alpha-amino group of Ala or Ser residue in the [Ala/Ser]-Pro-Lys motif and mono- or di-methylation of Pro in the Pro-Pro-Lys motif. The chain is Alpha N-terminal protein methyltransferase 1 from Arabidopsis thaliana (Mouse-ear cress).